A 2057-amino-acid polypeptide reads, in one-letter code: Protein TIC 214 (2057 aa).

Helical transmembrane passes span 13–33 (KIIN…AFSI), 62–82 (LIMG…HIAL), 158–178 (LFVT…CEFF), and 206–226 (SDYF…HSFG). The stretch at 248-340 (LILKGTDEEE…RVIQEKERKS (93 aa)) forms a coiled coil. Over residues 288–302 (NHLKKKKDRQKKQGT) the composition is skewed to basic residues. Disordered regions lie at residues 288 to 316 (NHLK…NSNT), 614 to 807 (ETHT…EEKG), 890 to 910 (DEQT…NDRV), 1597 to 1634 (EEEE…TNND), and 1724 to 1817 (KKKN…KSLS). Composition is skewed to basic and acidic residues over residues 621 to 657 (ATDK…KETK) and 665 to 702 (NTVD…KETK). Residues 704–713 (NASKETNTVN) are compositionally biased toward polar residues. 2 stretches are compositionally biased toward basic and acidic residues: residues 714 to 807 (KETK…EEKG) and 891 to 900 (EQTKREEKPK). Residues 1597 to 1619 (EEEEINPEEEINPEEEINPEEEI) show a composition bias toward acidic residues. The span at 1622–1634 (SSNQKTPIGTNND) shows a compositional bias: polar residues. The segment covering 1753-1817 (TNSEKKSKTN…ETDSEKKSLS (65 aa)) has biased composition (basic and acidic residues).

It belongs to the TIC214 family. Part of the Tic complex.

Its subcellular location is the plastid. It localises to the chloroplast inner membrane. Its function is as follows. Involved in protein precursor import into chloroplasts. May be part of an intermediate translocation complex acting as a protein-conducting channel at the inner envelope. In Ipomoea purpurea (Common morning glory), this protein is Protein TIC 214.